A 506-amino-acid polypeptide reads, in one-letter code: GMP synthase [glutamine-hydrolyzing] (506 aa).

In terms of domain architecture, Glutamine amidotransferase type-1 spans 4 to 192 (KLIILDFGSQ…FLDICGMKRD (189 aa)). Cys-79 serves as the catalytic Nucleophile. Catalysis depends on residues His-167 and Glu-169. A GMPS ATP-PPase domain is found at 193–381 (WTPASFIEAT…LGMMPHLIHR (189 aa)). 220–226 (SGGVDSS) provides a ligand contact to ATP.

As to quaternary structure, homodimer.

It catalyses the reaction XMP + L-glutamine + ATP + H2O = GMP + L-glutamate + AMP + diphosphate + 2 H(+). It participates in purine metabolism; GMP biosynthesis; GMP from XMP (L-Gln route): step 1/1. Its function is as follows. Catalyzes the synthesis of GMP from XMP. This Porphyromonas gingivalis (strain ATCC 33277 / DSM 20709 / CIP 103683 / JCM 12257 / NCTC 11834 / 2561) protein is GMP synthase [glutamine-hydrolyzing].